The following is a 310-amino-acid chain: Mycothiol acetyltransferase (310 aa).

2 N-acetyltransferase domains span residues 5 to 155 (TTVE…HPAR) and 160 to 309 (PPFR…LPAA). Residue 80–82 (LLV) coordinates acetyl-CoA. 1D-myo-inositol 2-(L-cysteinylamino)-2-deoxy-alpha-D-glucopyranoside contacts are provided by D187, K226, and E238. 242–244 (IAT) contacts acetyl-CoA. Residue Y276 participates in 1D-myo-inositol 2-(L-cysteinylamino)-2-deoxy-alpha-D-glucopyranoside binding. Position 281 to 286 (281 to 286 (NERALR)) interacts with acetyl-CoA.

Belongs to the acetyltransferase family. MshD subfamily. As to quaternary structure, monomer.

It catalyses the reaction 1D-myo-inositol 2-(L-cysteinylamino)-2-deoxy-alpha-D-glucopyranoside + acetyl-CoA = mycothiol + CoA + H(+). Functionally, catalyzes the transfer of acetyl from acetyl-CoA to desacetylmycothiol (Cys-GlcN-Ins) to form mycothiol. The polypeptide is Mycothiol acetyltransferase (Acidimicrobium ferrooxidans (strain DSM 10331 / JCM 15462 / NBRC 103882 / ICP)).